The sequence spans 188 residues: Protein SSX3 (188 aa).

Residues 20–83 enclose the KRAB-related domain; that stretch reads KIQKAFDDIA…KRVTDFQGND (64 aa). The segment at 113–162 is disordered; it reads PKKPAEEGNVSKEVPEASGPQNDGKQLCPPGKPTTSEKINMISGPKRGEH. Positions 115 to 127 are enriched in basic and acidic residues; sequence KPAEEGNVSKEVP. Residue Ser-123 is modified to Phosphoserine.

It belongs to the SSX family. In terms of assembly, interacts with SSX2IP.

Functionally, could act as a modulator of transcription. The sequence is that of Protein SSX3 (SSX3) from Homo sapiens (Human).